We begin with the raw amino-acid sequence, 136 residues long: Histone H3.1 (136 aa).

The interval 1–41 (MARTKQTARKSTGGKAPRKQLATKAARKSAPAAGGVKKPHR) is disordered. N6,N6,N6-trimethyllysine; alternate is present on lysine 5. At lysine 5 the chain carries N6,N6-dimethyllysine; alternate. N6-methyllysine; alternate occurs at positions 5 and 10. Lysine 10 is subject to N6-acetyllysine; alternate. Serine 11 is subject to Phosphoserine. Position 15 is an N6,N6-dimethyllysine; alternate (lysine 15). Lysine 15, lysine 19, lysine 24, lysine 28, and lysine 37 each carry N6-acetyllysine; alternate. N6-methyllysine; alternate is present on residues lysine 19, lysine 24, lysine 28, and lysine 37. Positions 22-33 (ATKAARKSAPAA) are enriched in low complexity. An N6,N6,N6-trimethyllysine; alternate mark is found at lysine 28 and lysine 37. An N6,N6-dimethyllysine; alternate mark is found at lysine 28 and lysine 37. Lysine 57 and lysine 65 each carry N6-acetyllysine. An N6,N6,N6-trimethyllysine; alternate modification is found at lysine 80. Lysine 80 is modified (N6,N6-dimethyllysine; alternate). The residue at position 80 (lysine 80) is an N6-methyllysine; alternate.

Belongs to the histone H3 family. In terms of assembly, the nucleosome is a histone octamer containing two molecules each of H2A, H2B, H3 and H4 assembled in one H3-H4 heterotetramer and two H2A-H2B heterodimers. The octamer wraps approximately 147 bp of DNA. In terms of processing, phosphorylated to form H3S10ph. H3S10ph promotes subsequent H3K14ac formation and is required for transcriptional activation through TBP recruitment to the promoters. Mono-, di- and trimethylated by the COMPASS complex to form H3K4me1/2/3. H3K4me activates gene expression by regulating transcription elongation and plays a role in telomere length maintenance. H3K4me enrichment correlates with transcription levels, and occurs in a 5' to 3' gradient with H3K4me3 enrichment at the 5'-end of genes, shifting to H3K4me2 and then H3K4me1. Methylated by SET2 to form H3K36me. H3K36me represses gene expression. Methylated by DOT1 to form H3K79me. H3K79me is required for association of SIR proteins with telomeric regions and for telomeric silencing. The COMPASS-mediated formation of H3K4me2/3 and the DOT1-mediated formation of H3K79me require H2BK123ub1. Post-translationally, acetylation of histone H3 leads to transcriptional activation. H3K14ac formation by GCN5 is promoted by H3S10ph. H3K14ac can also be formed by ESA1. H3K56ac formation occurs predominantly in newly synthesized H3 molecules during G1, S and G2/M of the cell cycle and may be involved in DNA repair.

Its subcellular location is the nucleus. The protein localises to the chromosome. In terms of biological role, core component of nucleosome. Nucleosomes wrap and compact DNA into chromatin, limiting DNA accessibility to the cellular machineries which require DNA as a template. Histones thereby play a central role in transcription regulation, DNA repair, DNA replication and chromosomal stability. DNA accessibility is regulated via a complex set of post-translational modifications of histones, also called histone code, and nucleosome remodeling. The sequence is that of Histone H3.1 (HHT1) from Mycosarcoma maydis (Corn smut fungus).